Here is a 652-residue protein sequence, read N- to C-terminus: Aorsin (652 aa).

Residues 1-22 (MRPLSHLSFFNGLLLGLSALSA) form the signal peptide. The propeptide at 23 to 215 (ATSVVHERRE…PRPIQQHDVK (193 aa)) is removed in mature form. Asn-112 is a glycosylation site (N-linked (GlcNAc...) asparagine). Residues 177 to 211 (VNLNPSSGKPSSIRRRAAASKKTKLPARGPRPIQQ) are disordered. Over residues 188 to 201 (SIRRRAAASKKTKL) the composition is skewed to basic residues. 2 N-linked (GlcNAc...) asparagine glycosylation sites follow: Asn-218 and Asn-247. The Peptidase S53 domain occupies 225–651 (LITPECIRAL…PKMLKLWLDL (427 aa)). Residues Glu-301 and Asp-305 each act as charge relay system in the active site. Residues Asn-331 and Asn-445 are each glycosylated (N-linked (GlcNAc...) asparagine). Ser-569 functions as the Charge relay system in the catalytic mechanism. Residues Asp-610 and Ile-611 each contribute to the Ca(2+) site. N-linked (GlcNAc...) asparagine glycosylation occurs at Asn-613. Positions 629 and 631 each coordinate Ca(2+).

The cofactor is Ca(2+). N-glycosylated. Post-translationally, O-glycosylated.

Its subcellular location is the secreted. It localises to the extracellular space. Its activity is regulated as follows. Inhibited by antipain and leupeptin. Its function is as follows. Serine endopeptidase which hydrolyzes a range of fluorogenic peptide substrates containing the basic residues arginine or lysine at the P1 position and prefers paired basic resides. Also hydrolyzes clupeine and salmine, activates plasminogen and converts trypsinogen to trypsin. The sequence is that of Aorsin from Aspergillus oryzae (strain ATCC 42149 / RIB 40) (Yellow koji mold).